A 490-amino-acid polypeptide reads, in one-letter code: Metal cation symporter ZIP14 (490 aa).

The signal sequence occupies residues 1-28 (MKLLHPAFQSCLLLTLLGLWRTTPEAHA). Topologically, residues 29–155 (SSPGAPAISA…PSAVEVWGYG (127 aa)) are extracellular. Residues asparagine 75, asparagine 85, and asparagine 100 are each glycosylated (N-linked (GlcNAc...) asparagine). The chain crosses the membrane as a helical span at residues 156–176 (LLCVTVISLCSLLGASVVPFM). The Cytoplasmic portion of the chain corresponds to 177–184 (KKTFYKRL). The helical transmembrane segment at 185–205 (LLYFIALAIGTLYSNALFQLI) threads the bilayer. At 206-222 (PEAFGFNPLEDYYVSKS) the chain is on the extracellular side. The helical transmembrane segment at 223–243 (AVVFGGFYLFFFTEKILKILL) threads the bilayer. Over 244 to 395 (KQKNEHHHGH…LLNAGMSIQQ (152 aa)) the chain is Cytoplasmic. The HHHGHXHX-motif motif lies at 249-256 (HHHGHSHY). Residues 374–379 (EEFPHE) carry the XEXPHE-motif motif. Residues 396–416 (ALFFNFLSACCCYLGLAFGIL) traverse the membrane as a helical segment. Over 417–422 (AGSHFS) the chain is Extracellular. Residues 423–443 (ANWIFALAGGMFLYISLADMF) form a helical membrane-spanning segment. The Cytoplasmic portion of the chain corresponds to 444–458 (PEMNEVCQEDERKGS). The helical transmembrane segment at 459–479 (ILIPFVIQNLGLLTGFTIMVV) threads the bilayer. At 480–490 (LTMYSGQIQIG) the chain is on the extracellular side.

The protein belongs to the ZIP transporter (TC 2.A.5) family. As to quaternary structure, homotrimer. Ubiquitinated. Ubiquitination occurs upon iron depletion. The ubiquitinated form undergoes proteasomal degradation. Post-translationally, N-glycosylated. N-glycosylation at Asn-100 is required for iron-regulated extraction of the transporter from membranes and subsequent proteasomal degradation.

The protein localises to the cell membrane. It localises to the apical cell membrane. Its subcellular location is the basolateral cell membrane. The protein resides in the early endosome membrane. It is found in the late endosome membrane. The protein localises to the lysosome membrane. It carries out the reaction Zn(2+)(out) + 2 hydrogencarbonate(out) = Zn(2+)(in) + 2 hydrogencarbonate(in). The enzyme catalyses Mn(2+)(out) + 2 hydrogencarbonate(out) = Mn(2+)(in) + 2 hydrogencarbonate(in). It catalyses the reaction Fe(2+)(out) + 2 hydrogencarbonate(out) = Fe(2+)(in) + 2 hydrogencarbonate(in). The catalysed reaction is Cd(2+)(out) + 2 hydrogencarbonate(out) = Cd(2+)(in) + 2 hydrogencarbonate(in). Its function is as follows. Electroneutral transporter of the plasma membrane mediating the cellular uptake of the divalent metal cations zinc, manganese and iron that are important for tissue homeostasis, metabolism, development and immunity. Functions as an energy-dependent symporter, transporting through the membranes an electroneutral complex composed of a divalent metal cation and two bicarbonate anions. Beside these endogenous cellular substrates, can also import cadmium a non-essential metal which is cytotoxic and carcinogenic. Controls the cellular uptake by the intestinal epithelium of systemic zinc, which is in turn required to maintain tight junctions and the intestinal permeability. Modifies the activity of zinc-dependent phosphodiesterases, thereby indirectly regulating G protein-coupled receptor signaling pathways important for gluconeogenesis and chondrocyte differentiation. Regulates insulin receptor signaling, glucose uptake, glycogen synthesis and gluconeogenesis in hepatocytes through the zinc-dependent intracellular catabolism of insulin. Through zinc cellular uptake also plays a role in the adaptation of cells to endoplasmic reticulum stress. Major manganese transporter of the basolateral membrane of intestinal epithelial cells, it plays a central role in manganese systemic homeostasis through intestinal manganese uptake. Also involved in manganese extracellular uptake by cells of the blood-brain barrier. May also play a role in manganese and zinc homeostasis participating in their elimination from the blood through the hepatobiliary excretion. Also functions in the extracellular uptake of free iron. May also function intracellularly and mediate the transport from endosomes to cytosol of iron endocytosed by transferrin. Plays a role in innate immunity by regulating the expression of cytokines by activated macrophages. This is Metal cation symporter ZIP14 from Pongo abelii (Sumatran orangutan).